Consider the following 373-residue polypeptide: MNTLDIDKPPSSTRVVVAMSGGVDSSAVAALLKEQGYDVVGVTLQLYDLATSGIEPGACRPNTCCAGKDIHDARAVADALGIPHYVLDFEETFRRDVVERFAQTYLEARTPVPCIECNRTVKFRDLLGVAKDLGGDALATGHYVRRRPGVDGPELWTGRDPGRDQSYFLFATTRDQLDFLRFPLGDMAGKEETRAIAARHHLPVAAKRDSQDICFVPDGDYAALVTRLHPDAARPGEIVDTAGKVLGRHGGLIHYTIGQRRGLGLGGGPPLYVVALEPETGRVVVGSREDLNCLTIQVEAVNWLGGDETELRVAVKVRSTRPAAPALLRRLSGDRAQVILDHPEQGVAPGQACVFYQGERVLGGGWICPSREA.

ATP is bound by residues 18–25 (AMSGGVDS) and Leu44. Catalysis depends on Cys117, which acts as the Nucleophile. Cys117 and Cys214 form a disulfide bridge. Residue Gly141 participates in ATP binding. The interval 163 to 165 (RDQ) is interaction with tRNA. Cys214 (cysteine persulfide intermediate) is an active-site residue.

The protein belongs to the MnmA/TRMU family.

The protein resides in the cytoplasm. The catalysed reaction is S-sulfanyl-L-cysteinyl-[protein] + uridine(34) in tRNA + AH2 + ATP = 2-thiouridine(34) in tRNA + L-cysteinyl-[protein] + A + AMP + diphosphate + H(+). Catalyzes the 2-thiolation of uridine at the wobble position (U34) of tRNA, leading to the formation of s(2)U34. This chain is tRNA-specific 2-thiouridylase MnmA, found in Paramagnetospirillum magneticum (strain ATCC 700264 / AMB-1) (Magnetospirillum magneticum).